A 422-amino-acid polypeptide reads, in one-letter code: CRISPR-associated endodeoxyribonuclease Cas12f1 (422 aa).

The interval Met1–Asp126 is recognition domain (REC). The interval Leu127–Pro211 is wedge domain (WED). Residues Gln212–Lys220 form a linker region. Residues Ile221 to Gln370 are ruvC-I. Active-site residues include Asp225 and Glu324. A target nucleic acid-binding (TNB) region spans residues Arg371 to Asn399. 4 residues coordinate Zn(2+): Cys372, Cys375, Cys391, and Cys394. Residues Ala400–Ser420 are ruvC-II. The active site involves Asp401.

The protein belongs to the CRISPR-associated endonuclease Cas12f family. An asymmetric homodimer. Guide RNA is probably required for dimerization. Mg(2+) is required as a cofactor. Zn(2+) serves as cofactor.

Its function is as follows. CRISPR (clustered regularly interspaced short palindromic repeat), is an adaptive immune system that provides protection against mobile genetic elements (viruses, transposable elements and conjugative plasmids). CRISPR clusters contain sequences complementary to antecedent mobile elements and target invading nucleic acids. CRISPR clusters are transcribed and processed into CRISPR RNA (crRNA), which requires a trans-encoded small RNA (tracrRNA), but not this protein. Recognizes a short motif in the CRISPR repeat sequences (the 5' PAM or protospacer adjacent motif, YTT in this organism) to help distinguish self versus nonself, as targets within the CRISPR locus do not have PAMs. Has dsDNA endonuclease activity upon expression in E.coli of this protein, a mini CRISPR array and the probable tracrRNA. Plasmid cleavage is centered around positions 19-24 base pairs 3' of PAM. The mini system protects E.coli against transformation by foreign plasmids. This chain is CRISPR-associated endodeoxyribonuclease Cas12f1, found in Sulfoacidibacillus thermotolerans (Acidibacillus sulfuroxidans).